Here is a 606-residue protein sequence, read N- to C-terminus: Preterminal protein (606 aa).

The short motif at 320-329 (RLPVRRRRRR) is the Nuclear localization signal element. Residue serine 515 is modified to O-(5'-phospho-DNA)-serine. Residues 573-606 (HLPLPERQADIPLPPLPAGPEPPLPPGARPRRRF) are disordered. Positions 584 to 600 (PLPPLPAGPEPPLPPGA) are enriched in pro residues.

It belongs to the adenoviridae terminal protein family. Heterodimer with the polymerase; this heterodimer binds to bp 9 to 18 of the genome. Interacts with host POU2F1; POU2F1 binds to the auxiliary sequences in the inverted terminal repeats and tethers the pTP-POL heterodimer to the origin DNA thereby participating in the assembly of the pre-initiation complex (POL-TP-DBP-NFIA-POU2F1). In terms of processing, preterminal protein is used to replicate viral genome, upon genomic encapsidation it is processed first into iTP and finally into TP by adenovirus protease.

The protein localises to the host nucleus matrix. Functionally, protein covalently bound to the viral DNA that acts as a primer for viral genomic replication by DNA strand displacement. Assembles on the viral origin of replication in an initiation complex with viral polymerase, DBP, host NFIA and host POU2F1/OCT1. During initiation, the polymerase covalently couples the first dCTP with Ser-580 of pTP. The terminal protein stimulates the template activity over 20 fold compared to protein-free templates. Neo-synthesized viral genomes are linked to two preterminal proteins, one for each 5' end. These new genomes are encapsidated in the nucleus, and during capsid maturation by viral protease, preterminal protein is first cleaved into intermediary (iTP), then into mature TP. May play a role in host nuclear matrix localization of genomic DNA. This Human adenovirus A serotype 12 (HAdV-12) protein is Preterminal protein.